The sequence spans 221 residues: Very-long-chain (3R)-3-hydroxyacyl-CoA dehydratase PASTICCINO 2B (221 aa).

The Cytoplasmic portion of the chain corresponds to 1–11 (MTGVGSAVRRL). The chain crosses the membrane as a helical span at residues 12–32 (YLSVYNWAVFFGWAQVLYYAV). Over 33 to 51 (TTLLESGHEAVYAAVERPL) the chain is Lumenal. A helical transmembrane segment spans residues 52–70 (QFAQTAAFLEILHGLVGLV). Topologically, residues 71-76 (RSPVSA) are cytoplasmic. The helical transmembrane segment at 77 to 95 (TLPQIGSRLFLTWGILWSF) threads the bilayer. Topologically, residues 96–100 (PETHS) are lumenal. The chain crosses the membrane as a helical span at residues 101–121 (HILVTSLVISWSITEIIRYSF). Over 122-141 (FGMKETFGFAPSWLLWLRYS) the chain is Cytoplasmic. A helical transmembrane segment spans residues 142–165 (TFMVLYPTGISSEVGLIYIALPYM). Catalysis depends on residues Y147 and E154. Residues 166-184 (KATEKYCLRMPNKWNFSFD) are Lumenal-facing. A helical membrane pass occupies residues 185-209 (FSYASILSLAVYVPGSPHMFTYMLA). Topologically, residues 210 to 221 (QRKKALAKAKAA) are cytoplasmic.

It belongs to the very long-chain fatty acids dehydratase HACD family.

The protein localises to the endoplasmic reticulum membrane. It catalyses the reaction a very-long-chain (3R)-3-hydroxyacyl-CoA = a very-long-chain (2E)-enoyl-CoA + H2O. It participates in lipid metabolism; fatty acid biosynthesis. In terms of biological role, catalyzes the third of the four reactions of the long-chain fatty acids elongation cycle. This endoplasmic reticulum-bound enzymatic process, allows the addition of two carbons to the chain of long- and very long-chain fatty acids/VLCFAs per cycle. This enzyme catalyzes the dehydration of the 3-hydroxyacyl-CoA intermediate into trans-2,3-enoyl-CoA, within each cycle of fatty acid elongation. Thereby, it participates in the production of VLCFAs of different chain lengths that are involved in multiple biological processes as precursors of membrane lipids and lipid mediators. May be an anti-phosphatase that prevents CDKA-1 dephosphorylation and activation. Involved in the hormonal control of cell division and differentiation. Required for proliferation control of meristematic and non-meristematic cells. Negative regulator of the cell cycle. The polypeptide is Very-long-chain (3R)-3-hydroxyacyl-CoA dehydratase PASTICCINO 2B (PAS2B) (Oryza sativa subsp. japonica (Rice)).